A 360-amino-acid polypeptide reads, in one-letter code: Phospho-N-acetylmuramoyl-pentapeptide-transferase (360 aa).

Helical transmembrane passes span glycine 27–leucine 47, glycine 70–tryptophan 90, valine 98–leucine 118, leucine 134–alanine 154, alanine 168–glycine 188, glycine 199–valine 219, leucine 239–proline 259, isoleucine 263–alanine 283, isoleucine 288–valine 308, and glutamine 337–leucine 357.

It belongs to the glycosyltransferase 4 family. MraY subfamily. Mg(2+) serves as cofactor.

It localises to the cell inner membrane. It catalyses the reaction UDP-N-acetyl-alpha-D-muramoyl-L-alanyl-gamma-D-glutamyl-meso-2,6-diaminopimeloyl-D-alanyl-D-alanine + di-trans,octa-cis-undecaprenyl phosphate = di-trans,octa-cis-undecaprenyl diphospho-N-acetyl-alpha-D-muramoyl-L-alanyl-D-glutamyl-meso-2,6-diaminopimeloyl-D-alanyl-D-alanine + UMP. It participates in cell wall biogenesis; peptidoglycan biosynthesis. Its function is as follows. Catalyzes the initial step of the lipid cycle reactions in the biosynthesis of the cell wall peptidoglycan: transfers peptidoglycan precursor phospho-MurNAc-pentapeptide from UDP-MurNAc-pentapeptide onto the lipid carrier undecaprenyl phosphate, yielding undecaprenyl-pyrophosphoryl-MurNAc-pentapeptide, known as lipid I. The protein is Phospho-N-acetylmuramoyl-pentapeptide-transferase of Methylorubrum populi (strain ATCC BAA-705 / NCIMB 13946 / BJ001) (Methylobacterium populi).